The following is a 139-amino-acid chain: Growth factor (139 aa).

A signal peptide spans 1–19 (MSMKYLMLLFATMIIRSFA). Residue Asn34 is glycosylated (N-linked (GlcNAc...) asparagine; by host). One can recognise an EGF-like domain in the interval 41 to 81 (AIRLCGPEGDGYCLHGDCIHARDINGMYCRCSHGYTGIRCQ). 3 cysteine pairs are disulfide-bonded: Cys45–Cys58, Cys53–Cys69, and Cys71–Cys80. A glycan (N-linked (GlcNAc...) asparagine; by host) is linked at Asn95.

Belongs to the orthopoxvirus OPG019 family.

It localises to the secreted. Functionally, stimulates cellular proliferation (hyperplasia)and mobility around infected cells to promote rapid and efficient spread of infection. This Camelus protein is Growth factor (OPG019).